The following is a 418-amino-acid chain: Gamma-glutamyl phosphate reductase (418 aa).

It belongs to the gamma-glutamyl phosphate reductase family.

It localises to the cytoplasm. The catalysed reaction is L-glutamate 5-semialdehyde + phosphate + NADP(+) = L-glutamyl 5-phosphate + NADPH + H(+). The protein operates within amino-acid biosynthesis; L-proline biosynthesis; L-glutamate 5-semialdehyde from L-glutamate: step 2/2. Its function is as follows. Catalyzes the NADPH-dependent reduction of L-glutamate 5-phosphate into L-glutamate 5-semialdehyde and phosphate. The product spontaneously undergoes cyclization to form 1-pyrroline-5-carboxylate. In Desulfotalea psychrophila (strain LSv54 / DSM 12343), this protein is Gamma-glutamyl phosphate reductase.